Consider the following 363-residue polypeptide: S-adenosylmethionine:tRNA ribosyltransferase-isomerase (363 aa).

Belongs to the QueA family. As to quaternary structure, monomer.

Its subcellular location is the cytoplasm. The enzyme catalyses 7-aminomethyl-7-carbaguanosine(34) in tRNA + S-adenosyl-L-methionine = epoxyqueuosine(34) in tRNA + adenine + L-methionine + 2 H(+). It participates in tRNA modification; tRNA-queuosine biosynthesis. Transfers and isomerizes the ribose moiety from AdoMet to the 7-aminomethyl group of 7-deazaguanine (preQ1-tRNA) to give epoxyqueuosine (oQ-tRNA). The polypeptide is S-adenosylmethionine:tRNA ribosyltransferase-isomerase (Haemophilus influenzae (strain PittEE)).